Reading from the N-terminus, the 675-residue chain is Heat shock 70 kDa protein, mitochondrial (675 aa).

The transit peptide at 1 to 51 directs the protein to the mitochondrion; it reads MAAVLRSLRRRDVASATFSAYRSLTGSTKPAYVAQKWSCLARPFSSRPAGN. Positions 638 to 675 are disordered; it reads VSKIGEHMSGGSSGGSSAGGSQGGGDQAPEAEYEEVKK. Residues 648–663 show a composition bias toward gly residues; sequence GSSGGSSAGGSQGGGD. Acidic residues predominate over residues 666 to 675; the sequence is PEAEYEEVKK.

Belongs to the heat shock protein 70 family.

It localises to the mitochondrion. This chain is Heat shock 70 kDa protein, mitochondrial, found in Phaseolus vulgaris (Kidney bean).